The primary structure comprises 122 residues: uncharacterized protein (122 aa).

Residues 79-90 (NERVTSRVTNSR) are compositionally biased toward polar residues. The segment at 79–122 (NERVTSRVTNSRTESESNGNGNATGNTSSNANSNGNANGIYIRK) is disordered. Residues 94-122 (ESNGNGNATGNTSSNANSNGNANGIYIRK) show a composition bias toward low complexity.

This is an uncharacterized protein from Leptolyngbya boryana (Plectonema boryanum).